The sequence spans 963 residues: MSSSAADPSAARLNSDVRQRHPTASAASEDVEDALLQQQKEADAAASRAKKTYGKTPDGTVFVVPTTHDMVTQLLDPREPKNLSDVAVLAIIALHFLAAYYLPWGVKRPLFAAIFMFWRLAYNVGIGYLLTIQSKYKLLVTWAKRWKLFENPATGKNPRPWLYNLLKKELETKIPQDYKFEEAPIEYNTWLTFRRVVDLILMCDFISYCLFAIVCAHKPDGEGFFVGFARWVVGITLVGFNLWVKLDAHRVVKDYAWYWGDFFYLIEQELTFDGVFELAPHPMYSIGYAGYYGISMMAASYDVLFISIIAHAAQFAFLVVVENPHIEKTYNPPQPRVRSESEAGSQLQEVASEYSVPSTSGRHNDNSPQPVHNLIGLKNLDFFRITDVAVVLLSAYLAVVTMVTPNTRFYQALFVLHALAWRVWYSFGLGVILTMQSEEKMFTRHFLKYGESLGEAWRQWKGIYHLSNCLCHASFIAACYKMYEFPAGGDNGWALLKHVVGLGLIALQVWTATSIYESLGEFGWFYGDFFFDSKRQLTYTSIYRFLNNPERVFGTAGLWGAALITWSRAIFLMALAGHFLTLAFLAYVEKPHMQKVYGRNLRDDAGVTKFIKRSLPPPVTEWQQSIDKVLDETKHFIDEFVEAARSRLATGSSTIVKDTSALFNKYPARLTISKISADLAGYDPKHYGLSLAGTPVVGTNEKATGKESPNARVLKDVKTQSFEYGAPIRVKWTAPAKHSKKDWIGLYMVTDNRSREVTEVPSLGRWVPTNPGEYDTTTDQGILVWDQPVEKKSEDTDLVEGEMIFEGDKLWWTQGVFEFRYHHGGGHHVMSISEPFEIQIPKFDDEHRGVDISAGSGEVGERAVEAALLPVIRNCLDRDPDIAPSNADERFGGHVERDGKYARRVVYAIRHMFGIDFAPAVVLADGNVRRLAWRICHAKEVLAPFSMSHTNGRTTPVDSKFSE.

The segment at 1–32 is disordered; sequence MSSSAADPSAARLNSDVRQRHPTASAASEDVE. Residues 1-85 are Lumenal-facing; it reads MSSSAADPSA…DPREPKNLSD (85 aa). The chain crosses the membrane as a helical span at residues 86-106; that stretch reads VAVLAIIALHFLAAYYLPWGV. Residues 107–109 lie on the Cytoplasmic side of the membrane; that stretch reads KRP. The helical transmembrane segment at 110 to 130 threads the bilayer; sequence LFAAIFMFWRLAYNVGIGYLL. Topologically, residues 131 to 195 are lumenal; it reads TIQSKYKLLV…EYNTWLTFRR (65 aa). The helical transmembrane segment at 196–216 threads the bilayer; that stretch reads VVDLILMCDFISYCLFAIVCA. Over 217–223 the chain is Cytoplasmic; it reads HKPDGEG. Residues 224–244 traverse the membrane as a helical segment; sequence FFVGFARWVVGITLVGFNLWV. Residues 245–273 are Lumenal-facing; that stretch reads KLDAHRVVKDYAWYWGDFFYLIEQELTFD. A helical transmembrane segment spans residues 274–294; that stretch reads GVFELAPHPMYSIGYAGYYGI. Over 295-300 the chain is Cytoplasmic; sequence SMMAAS. The chain crosses the membrane as a helical span at residues 301–321; it reads YDVLFISIIAHAAQFAFLVVV. Residues 322 to 384 are Lumenal-facing; it reads ENPHIEKTYN…IGLKNLDFFR (63 aa). The helical transmembrane segment at 385–405 threads the bilayer; that stretch reads ITDVAVVLLSAYLAVVTMVTP. Residues 406 to 412 lie on the Cytoplasmic side of the membrane; sequence NTRFYQA. The helical transmembrane segment at 413-433 threads the bilayer; it reads LFVLHALAWRVWYSFGLGVIL. Residues 434-462 are Lumenal-facing; it reads TMQSEEKMFTRHFLKYGESLGEAWRQWKG. The chain crosses the membrane as a helical span at residues 463–483; that stretch reads IYHLSNCLCHASFIAACYKMY. Residues 484-491 lie on the Cytoplasmic side of the membrane; that stretch reads EFPAGGDN. A helical membrane pass occupies residues 492–512; that stretch reads GWALLKHVVGLGLIALQVWTA. Residues 513–568 are Lumenal-facing; it reads TSIYESLGEFGWFYGDFFFDSKRQLTYTSIYRFLNNPERVFGTAGLWGAALITWSR. A helical membrane pass occupies residues 569–589; it reads AIFLMALAGHFLTLAFLAYVE. At 590–963 the chain is on the cytoplasmic side; it reads KPHMQKVYGR…TTPVDSKFSE (374 aa).

This sequence belongs to the class VI-like SAM-binding methyltransferase superfamily. CHO2 family.

Its subcellular location is the endoplasmic reticulum membrane. It carries out the reaction a 1,2-diacyl-sn-glycero-3-phosphoethanolamine + S-adenosyl-L-methionine = a 1,2-diacyl-sn-glycero-3-phospho-N-methylethanolamine + S-adenosyl-L-homocysteine + H(+). The protein operates within phospholipid metabolism; phosphatidylcholine biosynthesis. Catalyzes the first step of the methylation pathway of phosphatidylcholine biosynthesis, the SAM-dependent methylation of phosphatidylethanolamine (PE) to phosphatidylmonomethylethanolamine (PMME). The chain is Phosphatidylethanolamine N-methyltransferase (CHO2) from Sordaria macrospora (strain ATCC MYA-333 / DSM 997 / K(L3346) / K-hell).